The primary structure comprises 515 residues: Bifunctional purine biosynthesis protein PurH (515 aa).

Residues 1-145 (MTKRALISVS…KNHASVTVVV (145 aa)) form the MGS-like domain.

This sequence belongs to the PurH family.

It carries out the reaction (6R)-10-formyltetrahydrofolate + 5-amino-1-(5-phospho-beta-D-ribosyl)imidazole-4-carboxamide = 5-formamido-1-(5-phospho-D-ribosyl)imidazole-4-carboxamide + (6S)-5,6,7,8-tetrahydrofolate. It catalyses the reaction IMP + H2O = 5-formamido-1-(5-phospho-D-ribosyl)imidazole-4-carboxamide. Its pathway is purine metabolism; IMP biosynthesis via de novo pathway; 5-formamido-1-(5-phospho-D-ribosyl)imidazole-4-carboxamide from 5-amino-1-(5-phospho-D-ribosyl)imidazole-4-carboxamide (10-formyl THF route): step 1/1. The protein operates within purine metabolism; IMP biosynthesis via de novo pathway; IMP from 5-formamido-1-(5-phospho-D-ribosyl)imidazole-4-carboxamide: step 1/1. The chain is Bifunctional purine biosynthesis protein PurH from Streptococcus thermophilus (strain ATCC BAA-491 / LMD-9).